Reading from the N-terminus, the 770-residue chain is Pyrophosphate-energized vacuolar membrane proton pump 1 (770 aa).

At 1 to 9 (MVAPALLPE) the chain is on the intravacuolar side. A helical transmembrane segment spans residues 10–36 (LWTEILVPICAVIGIAFSLFQWYVVSR). Residues 37–88 (VKLTSDLGASSSGGANNGKNGYGDYLIEEEEGVNDQSVVAKCAEIQTAISEG) are Cytoplasmic-facing. Residues 89-118 (ATSFLFTEYKYVGVFMIFFAAVIFVFLGSV) form a helical membrane-spanning segment. Topologically, residues 119–139 (EGFSTDNKPCTYDTTRTCKPA) are intravacuolar. The cysteines at positions 128 and 136 are disulfide-linked. A helical transmembrane segment spans residues 140–167 (LATAAFSTIAFVLGAVTSVLSGFLGMKI). Topologically, residues 168–190 (ATYANARTTLEARKGVGKAFIVA) are cytoplasmic. The chain crosses the membrane as a helical span at residues 191-220 (FRSGAVMGFLLAASGLLVLYITINVFKIYY). Over 221-223 (GDD) the chain is Intravacuolar. A helical membrane pass occupies residues 224 to 252 (WEGLFEAITGYGLGGSSMALFGRVGGGIY). Residues 253-290 (TKAADVGADLVGKIERNIPEDDPRNPAVIADNVGDNVG) are Cytoplasmic-facing. A substrate-binding site is contributed by Lys254. Residues Asp257, Asp261, and Asp287 each coordinate Mg(2+). A helical membrane pass occupies residues 291-316 (DIAGMGSDLFGSYAEASCAALVVASI). Residues 317–324 (SSFGINHD) lie on the Intravacuolar side of the membrane. Residues 325-350 (FTAMCYPLLISSMGILVCLITTLFAT) form a helical membrane-spanning segment. The Cytoplasmic segment spans residues 351-358 (DFFEIKLV). A helical transmembrane segment spans residues 359 to 386 (KEIEPALKNQLIISTVIMTVGIAIVSWV). At 387-405 (GLPTSFTIFNFGTQKVVKN) the chain is on the intravacuolar side. A helical membrane pass occupies residues 406 to 429 (WQLFLCVCVGLWAGLIIGFVTEYY). Residues 430 to 451 (TSNAYSPVQDVADSCRTGAATN) are Cytoplasmic-facing. The chain crosses the membrane as a helical span at residues 452 to 476 (VIFGLALGYKSVIIPIFAIAISIFV). The Intravacuolar portion of the chain corresponds to 477-482 (SFSFAA). Residues 483–509 (MYGVAVAALGMLSTIATGLAIDAYGPI) form a helical membrane-spanning segment. The Cytoplasmic segment spans residues 510-538 (SDNAGGIAEMAGMSHRIRERTDALDAAGN). 2 residues coordinate Mg(2+): Asp511 and Asn538. A helical transmembrane segment spans residues 539–567 (TTAAIGKGFAIGSAALVSLALFGAFVSRA). Residues 568–577 (GIHTVDVLTP) are Intravacuolar-facing. The chain crosses the membrane as a helical span at residues 578–606 (KVIIGLLVGAMLPYWFSAMTMKSVGSAAL). At 607–635 (KMVEEVRRQFNTIPGLMEGTAKPDYATCV) the chain is on the cytoplasmic side. Residues 636–664 (KISTDASIKEMIPPGCLVMLTPLIVGFFF) form a helical membrane-spanning segment. Gly665 is a topological domain (intravacuolar). A helical transmembrane segment spans residues 666–693 (VETLSGVLAGSLVSGVQIAISASNTGGA). Residues 694-736 (WDNAKKYIEAGVSEHAKSLGPKGSEPHKAAVIGDTIGDPLKDT) are Cytoplasmic-facing. The Mg(2+) site is built by Asp695 and Asp731. Lys734 contacts substrate. A helical membrane pass occupies residues 737–762 (SGPSLNILIKLMAVESLVFAPFFATH). At 763-770 (GGILFKYF) the chain is on the intravacuolar side.

The protein belongs to the H(+)-translocating pyrophosphatase (TC 3.A.10) family. K(+)-stimulated subfamily. In terms of assembly, monomer. In terms of tissue distribution, ubiquitous (at protein level). Mostly expressed in vascular tissues, meristems and root pericycle.

The protein resides in the vacuole membrane. It localises to the endosome membrane. It is found in the cell membrane. The catalysed reaction is diphosphate + H2O + H(+)(in) = 2 phosphate + 2 H(+)(out). Activated by K(+) and Mg(2+). Inhibited by Ca(2+), N,N'-dicyclohexylcarbodiimide (DCCD), N-ethylmaleimide (NEM) and aminomethylenediphosphonate (AMDP), and, to a lower extent, by fluoride (KF). Its function is as follows. Contributes to the transtonoplast (from cytosol to vacuole lumen) H(+)-electrochemical potential difference. It establishes a proton gradient of similar and often greater magnitude than the H(+)-ATPase on the same membrane. In addition, facilitates auxin transport by modulating apoplastic pH and regulates auxin-mediated developmental processes. Confers tolerance to NaCl and to drought by increasing ion retention. The protein is Pyrophosphate-energized vacuolar membrane proton pump 1 (AVP1) of Arabidopsis thaliana (Mouse-ear cress).